The chain runs to 523 residues: UDP-N-acetylmuramyl-tripeptide synthetase (523 aa).

Ser38 is a UDP-N-acetyl-alpha-D-muramoyl-L-alanyl-D-glutamate binding site. ATP is bound at residue 116-122 (GTKGKTT). Residues 162–163 (TT), Ser189, and Arg197 each bind UDP-N-acetyl-alpha-D-muramoyl-L-alanyl-D-glutamate. Lys231 carries the post-translational modification N6-carboxylysine.

It belongs to the MurCDEF family. MurE subfamily. Carboxylation is probably crucial for Mg(2+) binding and, consequently, for the gamma-phosphate positioning of ATP.

The protein localises to the cytoplasm. It functions in the pathway cell wall biogenesis; peptidoglycan biosynthesis. In terms of biological role, catalyzes the addition of an amino acid to the nucleotide precursor UDP-N-acetylmuramoyl-L-alanyl-D-glutamate (UMAG) in the biosynthesis of bacterial cell-wall peptidoglycan. This Lactobacillus acidophilus (strain ATCC 700396 / NCK56 / N2 / NCFM) protein is UDP-N-acetylmuramyl-tripeptide synthetase.